We begin with the raw amino-acid sequence, 380 residues long: DNA replication and repair protein RecF (380 aa).

30-37 (GENAQGKT) lines the ATP pocket.

It belongs to the RecF family.

The protein resides in the cytoplasm. The RecF protein is involved in DNA metabolism; it is required for DNA replication and normal SOS inducibility. RecF binds preferentially to single-stranded, linear DNA. It also seems to bind ATP. In Synechococcus sp. (strain JA-2-3B'a(2-13)) (Cyanobacteria bacterium Yellowstone B-Prime), this protein is DNA replication and repair protein RecF.